A 584-amino-acid chain; its full sequence is Galectin-3-binding protein (584 aa).

The first 18 residues, 1–18 (MTPPRLFWVWLLVAGTQG), serve as a signal peptide directing secretion. Residues 24–124 (MRLADGGATN…HERDAGVVCT (101 aa)) form the SRCR domain. 3 disulfides stabilise this stretch: cysteine 49–cysteine 113, cysteine 62–cysteine 123, and cysteine 93–cysteine 103. N-linked (GlcNAc...) asparagine glycosylation occurs at asparagine 69. Residues asparagine 125 and asparagine 192 are each glycosylated (N-linked (GlcNAc...) asparagine). One can recognise a BTB domain in the interval 153–221 (CDLSISVNVQ…FYSRRIDITL (69 aa)). One can recognise a BACK domain in the interval 260-359 (PLDLYAYAVA…MLPEELFELQ (100 aa)). Asparagine 361, asparagine 397, asparagine 550, and asparagine 579 each carry an N-linked (GlcNAc...) asparagine glycan.

Homodimers and homomultimers. The multimers form ring-like structures with a diameter of 30-40 nm. Binds LGALS1 and LGALS3. Binds ITGB1, COL4A1, COL5A1, COL6A1, FN1 and NID. Interacts with the gamma-tubulin ring complex (gamma-TuRC), composed of gamma-tubulin, TUBGCP2, TUBGCP3, TUBGCP4, TUBGCP5 and TUBGCP6. The unglycosylated form interacts with PDE4DIP; this interaction, which is PDE4DIP isoform-specific, may connect a pericentrosomal complex, made of AKAP9, CDK5RAP2, EB1/MAPRE1 and PDE4DIP, to the gamma-tubulin ring complex (gamma-TuRC) to promote microtubule assembly and acetylation.

It localises to the secreted. The protein localises to the extracellular space. Its subcellular location is the extracellular matrix. In terms of biological role, promotes integrin-mediated cell adhesion. May stimulate host defense against viruses and tumor cells. This chain is Galectin-3-binding protein (LGALS3BP), found in Pongo abelii (Sumatran orangutan).